A 71-amino-acid polypeptide reads, in one-letter code: Small ribosomal subunit protein eS17 (71 aa).

It belongs to the eukaryotic ribosomal protein eS17 family.

The sequence is that of Small ribosomal subunit protein eS17 from Pyrobaculum aerophilum (strain ATCC 51768 / DSM 7523 / JCM 9630 / CIP 104966 / NBRC 100827 / IM2).